The chain runs to 338 residues: Lipoate-protein ligase A (338 aa).

The BPL/LPL catalytic domain maps to 29-216 (PATQRVLFLW…AFFAHYGERV (188 aa)). ATP is bound by residues Arg-71, 76–79 (GAVF), and Lys-134. A (R)-lipoate-binding site is contributed by Lys-134.

Belongs to the LplA family. Monomer.

It localises to the cytoplasm. It carries out the reaction L-lysyl-[lipoyl-carrier protein] + (R)-lipoate + ATP = N(6)-[(R)-lipoyl]-L-lysyl-[lipoyl-carrier protein] + AMP + diphosphate + H(+). It participates in protein modification; protein lipoylation via exogenous pathway; protein N(6)-(lipoyl)lysine from lipoate: step 1/2. The protein operates within protein modification; protein lipoylation via exogenous pathway; protein N(6)-(lipoyl)lysine from lipoate: step 2/2. Its function is as follows. Catalyzes both the ATP-dependent activation of exogenously supplied lipoate to lipoyl-AMP and the transfer of the activated lipoyl onto the lipoyl domains of lipoate-dependent enzymes. The protein is Lipoate-protein ligase A of Salmonella choleraesuis (strain SC-B67).